An 85-amino-acid polypeptide reads, in one-letter code: Large ribosomal subunit protein bL27 (85 aa).

The interval 1 to 24 is disordered; that stretch reads MAHKKGQGSSRNGRDSNAQRRGVK.

This sequence belongs to the bacterial ribosomal protein bL27 family.

The sequence is that of Large ribosomal subunit protein bL27 from Syntrophus aciditrophicus (strain SB).